Reading from the N-terminus, the 255-residue chain is Hydroxyacylglutathione hydrolase (255 aa).

Positions 56, 58, 60, 61, 114, 133, and 171 each coordinate Zn(2+).

It belongs to the metallo-beta-lactamase superfamily. Glyoxalase II family. Monomer. It depends on Zn(2+) as a cofactor.

The enzyme catalyses an S-(2-hydroxyacyl)glutathione + H2O = a 2-hydroxy carboxylate + glutathione + H(+). Its pathway is secondary metabolite metabolism; methylglyoxal degradation; (R)-lactate from methylglyoxal: step 2/2. Thiolesterase that catalyzes the hydrolysis of S-D-lactoyl-glutathione to form glutathione and D-lactic acid. The chain is Hydroxyacylglutathione hydrolase from Rhodopseudomonas palustris (strain ATCC BAA-98 / CGA009).